We begin with the raw amino-acid sequence, 468 residues long: Probable protein phosphatase 2C 52 (468 aa).

One can recognise a PPM-type phosphatase domain in the interval 67-372 (SSCIFTQQGR…DDCAVVCLFL (306 aa)). Positions 102, 103, 317, and 363 each coordinate Mn(2+). Polar residues predominate over residues 413-429 (RSSSDQENETYGNVNTE). The disordered stretch occupies residues 413–442 (RSSSDQENETYGNVNTETDAEDEKTVGDQN).

This sequence belongs to the PP2C family. It depends on Mg(2+) as a cofactor. Mn(2+) serves as cofactor.

The catalysed reaction is O-phospho-L-seryl-[protein] + H2O = L-seryl-[protein] + phosphate. It carries out the reaction O-phospho-L-threonyl-[protein] + H2O = L-threonyl-[protein] + phosphate. This is Probable protein phosphatase 2C 52 from Arabidopsis thaliana (Mouse-ear cress).